The primary structure comprises 351 residues: Deoxyguanosinetriphosphate triphosphohydrolase-like protein (351 aa).

The 122-residue stretch at 75–196 folds into the HD domain; sequence RLTHTLEVAE…VRVADIIAYL (122 aa).

The protein belongs to the dGTPase family. Type 2 subfamily.

The polypeptide is Deoxyguanosinetriphosphate triphosphohydrolase-like protein (Desulfatibacillum aliphaticivorans).